A 258-amino-acid chain; its full sequence is uncharacterized protein (258 aa).

Residues Gly163–Gly187 traverse the membrane as a helical segment.

Its subcellular location is the membrane. This is an uncharacterized protein from Methanocaldococcus jannaschii (strain ATCC 43067 / DSM 2661 / JAL-1 / JCM 10045 / NBRC 100440) (Methanococcus jannaschii).